The sequence spans 253 residues: Triosephosphate isomerase, cytosolic (253 aa).

Substrate contacts are provided by N10 and K12. H96 acts as the Electrophile in catalysis. The active-site Proton acceptor is E166.

It belongs to the triosephosphate isomerase family. In terms of assembly, homodimer.

The protein resides in the cytoplasm. The enzyme catalyses D-glyceraldehyde 3-phosphate = dihydroxyacetone phosphate. The protein operates within carbohydrate biosynthesis; gluconeogenesis. Its pathway is carbohydrate degradation; glycolysis; D-glyceraldehyde 3-phosphate from glycerone phosphate: step 1/1. The polypeptide is Triosephosphate isomerase, cytosolic (TPI) (Oryza sativa subsp. japonica (Rice)).